We begin with the raw amino-acid sequence, 173 residues long: Large ribosomal subunit protein uL18 (173 aa).

The protein belongs to the universal ribosomal protein uL18 family. As to quaternary structure, part of the 50S ribosomal subunit. Contacts the 5S and 23S rRNAs.

Its function is as follows. This is one of the proteins that bind and probably mediate the attachment of the 5S RNA into the large ribosomal subunit, where it forms part of the central protuberance. The protein is Large ribosomal subunit protein uL18 of Methanococcoides burtonii (strain DSM 6242 / NBRC 107633 / OCM 468 / ACE-M).